Reading from the N-terminus, the 433-residue chain is Adenylosuccinate synthetase (433 aa).

GTP-binding positions include 11-17 (GDEGKGK) and 39-41 (GHT). Aspartate 12 functions as the Proton acceptor in the catalytic mechanism. Aspartate 12 and glycine 39 together coordinate Mg(2+). IMP is bound by residues 12-15 (DEGK), 37-40 (NAGH), threonine 134, arginine 148, asparagine 230, threonine 245, and arginine 309. Histidine 40 functions as the Proton donor in the catalytic mechanism. 305-311 (VTTGRKR) contributes to the substrate binding site. Residues arginine 311, 337–339 (KLD), and 419–421 (GTG) each bind GTP.

It belongs to the adenylosuccinate synthetase family. In terms of assembly, homodimer. Requires Mg(2+) as cofactor.

Its subcellular location is the cytoplasm. The catalysed reaction is IMP + L-aspartate + GTP = N(6)-(1,2-dicarboxyethyl)-AMP + GDP + phosphate + 2 H(+). It participates in purine metabolism; AMP biosynthesis via de novo pathway; AMP from IMP: step 1/2. In terms of biological role, plays an important role in the de novo pathway and in the salvage pathway of purine nucleotide biosynthesis. Catalyzes the first committed step in the biosynthesis of AMP from IMP. The polypeptide is Adenylosuccinate synthetase (Saccharomyces cerevisiae (strain JAY291) (Baker's yeast)).